Reading from the N-terminus, the 111-residue chain is Small ribosomal subunit protein bS18 (111 aa).

The tract at residues 1–32 is disordered; that stretch reads MDLENTENVENNNNNEEEVKAKGERKAHFNKE. Over residues 17-32 the composition is skewed to basic and acidic residues; it reads EEVKAKGERKAHFNKE.

This sequence belongs to the bacterial ribosomal protein bS18 family. As to quaternary structure, part of the 30S ribosomal subunit. Forms a tight heterodimer with protein bS6.

Its function is as follows. Binds as a heterodimer with protein bS6 to the central domain of the 16S rRNA, where it helps stabilize the platform of the 30S subunit. This is Small ribosomal subunit protein bS18 from Brachyspira hyodysenteriae (strain ATCC 49526 / WA1).